The chain runs to 303 residues: Oxygen-dependent coproporphyrinogen-III oxidase (303 aa).

Ser-93 lines the substrate pocket. A divalent metal cation is bound by residues His-97 and His-107. His-107 (proton donor) is an active-site residue. 109-111 (NVR) serves as a coordination point for substrate. Positions 146 and 176 each coordinate a divalent metal cation. The segment at 241–276 (YVEFNLVYDRGTLFGLQSGGRTESILMSLPPQVRWG) is important for dimerization. 259–261 (GGR) serves as a coordination point for substrate.

The protein belongs to the aerobic coproporphyrinogen-III oxidase family. In terms of assembly, homodimer. Requires a divalent metal cation as cofactor.

The protein resides in the cytoplasm. It catalyses the reaction coproporphyrinogen III + O2 + 2 H(+) = protoporphyrinogen IX + 2 CO2 + 2 H2O. It functions in the pathway porphyrin-containing compound metabolism; protoporphyrin-IX biosynthesis; protoporphyrinogen-IX from coproporphyrinogen-III (O2 route): step 1/1. Functionally, involved in the heme biosynthesis. Catalyzes the aerobic oxidative decarboxylation of propionate groups of rings A and B of coproporphyrinogen-III to yield the vinyl groups in protoporphyrinogen-IX. This chain is Oxygen-dependent coproporphyrinogen-III oxidase, found in Pseudomonas putida (strain ATCC 47054 / DSM 6125 / CFBP 8728 / NCIMB 11950 / KT2440).